Reading from the N-terminus, the 149-residue chain is Transcriptional repressor NrdR (149 aa).

A zinc finger spans residues 3–34; the sequence is CPFCATDDTKVVDSRLTADGYQIRRRRECPVC. One can recognise an ATP-cone domain in the interval 49-139; it reads PHIVKNNGSR…VYLSFDDVEE (91 aa).

Belongs to the NrdR family. The cofactor is Zn(2+).

In terms of biological role, negatively regulates transcription of bacterial ribonucleotide reductase nrd genes and operons by binding to NrdR-boxes. In Glaesserella parasuis serovar 5 (strain SH0165) (Haemophilus parasuis), this protein is Transcriptional repressor NrdR.